The following is a 305-amino-acid chain: rRNA 2'-O-methyltransferase fibrillarin (305 aa).

A disordered region spans residues 1–70 (MAYTPGSRGG…SGGRGGAKGG (70 aa)). The segment covering 7-69 (SRGGRGGSRG…SSGGRGGAKG (63 aa)) has biased composition (gly residues). Residues serine 111 and serine 114 each carry the phosphoserine modification. Residues 160–161 (TS), 179–180 (EF), 204–205 (DA), and 224–227 (DVAQ) contribute to the S-adenosyl-L-methionine site.

The protein belongs to the methyltransferase superfamily. Fibrillarin family. As to quaternary structure, component of box C/D small nucleolar ribonucleoprotein (snoRNP) particles. In terms of processing, by homology to other fibrillarins, some or all of the N-terminal domain arginines are modified to asymmetric dimethylarginine (DMA).

The protein localises to the nucleus. The protein resides in the nucleolus. It catalyses the reaction L-glutaminyl-[histone H2A] + S-adenosyl-L-methionine = N(5)-methyl-L-glutaminyl-[histone H2A] + S-adenosyl-L-homocysteine + H(+). Its function is as follows. S-adenosyl-L-methionine-dependent methyltransferase that has the ability to methylate both RNAs and proteins. Involved in pre-rRNA processing by catalyzing the site-specific 2'-hydroxyl methylation of ribose moieties in pre-ribosomal RNA. Site specificity is provided by a guide RNA that base pairs with the substrate. Methylation occurs at a characteristic distance from the sequence involved in base pairing with the guide RNA. Also acts as a protein methyltransferase by mediating methylation of 'Gln-105' of histone H2A (H2AQ105me), a modification that impairs binding of the FACT complex and is specifically present at 35S ribosomal DNA locus. The chain is rRNA 2'-O-methyltransferase fibrillarin (fib1) from Schizosaccharomyces pombe (strain 972 / ATCC 24843) (Fission yeast).